The sequence spans 189 residues: Peptidyl-tRNA hydrolase (189 aa).

TRNA is bound at residue Tyr15. Residue His20 is the Proton acceptor of the active site. The tRNA site is built by Phe66, Asn68, and Asn114.

This sequence belongs to the PTH family. In terms of assembly, monomer.

It is found in the cytoplasm. The catalysed reaction is an N-acyl-L-alpha-aminoacyl-tRNA + H2O = an N-acyl-L-amino acid + a tRNA + H(+). Functionally, hydrolyzes ribosome-free peptidyl-tRNAs (with 1 or more amino acids incorporated), which drop off the ribosome during protein synthesis, or as a result of ribosome stalling. Its function is as follows. Catalyzes the release of premature peptidyl moieties from peptidyl-tRNA molecules trapped in stalled 50S ribosomal subunits, and thus maintains levels of free tRNAs and 50S ribosomes. In Streptococcus suis (strain 98HAH33), this protein is Peptidyl-tRNA hydrolase.